The following is a 394-amino-acid chain: MNKYKRIFLVVMDSVGIGEAPDAEQFGDLGSDTIGHIAEHMNGLHMPNMVKLGLGNIREMKGISKVEKPLGYYTKMQEKSTGKDTMTGHWEIMGLYIDTPFQVFPEGFPKELLDELEEKTGRKIIGNKPASGTEILDELGQEQMETGSLIVYTSADSVLQIAAHEEVVPLDELYKICKIARELTLDEKYMVGRVIARPFVGEPGNFTRTPNRHDYALKPFGRTVMNELKDSDYDVIAIGKISDIYDGEGVTESLRTKSNMDGMDKVVDTLNMDFTGLSFLNLVDFDALFGHRRDPQGYGEALQEYDARLPEVFEKLKEDDLLLITADHGNDPVHHGTDHTREYVPLLAYSPSMKEGGQELPLRQTFADIGATVAENFGVKMPEYGTSFLNELKK.

Residues aspartate 13, aspartate 286, histidine 291, aspartate 327, histidine 328, and histidine 339 each coordinate Mn(2+).

This sequence belongs to the phosphopentomutase family. It depends on Mn(2+) as a cofactor.

Its subcellular location is the cytoplasm. It carries out the reaction 2-deoxy-alpha-D-ribose 1-phosphate = 2-deoxy-D-ribose 5-phosphate. The enzyme catalyses alpha-D-ribose 1-phosphate = D-ribose 5-phosphate. Its pathway is carbohydrate degradation; 2-deoxy-D-ribose 1-phosphate degradation; D-glyceraldehyde 3-phosphate and acetaldehyde from 2-deoxy-alpha-D-ribose 1-phosphate: step 1/2. In terms of biological role, isomerase that catalyzes the conversion of deoxy-ribose 1-phosphate (dRib-1-P) and ribose 1-phosphate (Rib-1-P) to deoxy-ribose 5-phosphate (dRib-5-P) and ribose 5-phosphate (Rib-5-P), respectively. In Bacillus anthracis (strain A0248), this protein is Phosphopentomutase.